Consider the following 353-residue polypeptide: Ribosome biogenesis protein BRX1 homolog (353 aa).

Residues methionine 1–glycine 10 are compositionally biased toward basic residues. The interval methionine 1–arginine 46 is disordered. Residues arginine 21–alanine 36 show a composition bias toward basic and acidic residues. Positions glutamate 60–glycine 249 constitute a Brix domain. A Glycyl lysine isopeptide (Lys-Gly) (interchain with G-Cter in SUMO2) cross-link involves residue lysine 160. A Phosphoserine modification is found at serine 261. Lysine 276 is subject to N6-acetyllysine. Glycyl lysine isopeptide (Lys-Gly) (interchain with G-Cter in SUMO2) cross-links involve residues lysine 314 and lysine 322.

Belongs to the BRX1 family.

Its subcellular location is the nucleus. The protein localises to the nucleolus. Required for biogenesis of the 60S ribosomal subunit. This Homo sapiens (Human) protein is Ribosome biogenesis protein BRX1 homolog (BRIX1).